The primary structure comprises 271 residues: N-acetylaspartate synthetase (271 aa).

A disordered region spans residues Met-1–Ala-38. Residues Cys-12 to Ser-24 show a composition bias toward pro residues. Positions Gly-25–Gly-37 are enriched in low complexity. The chain crosses the membrane as a helical span at residues Val-89 to Cys-109. The 144-residue stretch at Leu-115–Gln-258 folds into the N-acetyltransferase domain.

Belongs to the NAT8 family.

It localises to the cytoplasm. Its subcellular location is the microsome membrane. The protein localises to the mitochondrion membrane. The protein resides in the endoplasmic reticulum membrane. It catalyses the reaction L-aspartate + acetyl-CoA = N-acetyl-L-aspartate + CoA + H(+). Catalyzes the synthesis of N-acetylaspartate acid (NAA) from L-aspartate and acetyl-CoA. The polypeptide is N-acetylaspartate synthetase (nat8l) (Xenopus tropicalis (Western clawed frog)).